The following is a 239-amino-acid chain: tRNA uridine(34) hydroxylase (239 aa).

A Rhodanese domain is found at 124-214 (QGRELVMLDT…GILKYFEETD (91 aa)). Residue cysteine 178 is the Cysteine persulfide intermediate of the active site.

Belongs to the TrhO family.

It catalyses the reaction uridine(34) in tRNA + AH2 + O2 = 5-hydroxyuridine(34) in tRNA + A + H2O. Functionally, catalyzes oxygen-dependent 5-hydroxyuridine (ho5U) modification at position 34 in tRNAs. This chain is tRNA uridine(34) hydroxylase, found in Bordetella parapertussis (strain 12822 / ATCC BAA-587 / NCTC 13253).